Reading from the N-terminus, the 243-residue chain is 1-(5-phosphoribosyl)-5-[(5-phosphoribosylamino)methylideneamino] imidazole-4-carboxamide isomerase (243 aa).

Residue Asp-8 is the Proton acceptor of the active site. Asp-129 serves as the catalytic Proton donor.

Belongs to the HisA/HisF family.

It localises to the cytoplasm. It carries out the reaction 1-(5-phospho-beta-D-ribosyl)-5-[(5-phospho-beta-D-ribosylamino)methylideneamino]imidazole-4-carboxamide = 5-[(5-phospho-1-deoxy-D-ribulos-1-ylimino)methylamino]-1-(5-phospho-beta-D-ribosyl)imidazole-4-carboxamide. It functions in the pathway amino-acid biosynthesis; L-histidine biosynthesis; L-histidine from 5-phospho-alpha-D-ribose 1-diphosphate: step 4/9. This chain is 1-(5-phosphoribosyl)-5-[(5-phosphoribosylamino)methylideneamino] imidazole-4-carboxamide isomerase, found in Azorhizobium caulinodans (strain ATCC 43989 / DSM 5975 / JCM 20966 / LMG 6465 / NBRC 14845 / NCIMB 13405 / ORS 571).